Consider the following 257-residue polypeptide: Probable ABC transporter arginine-binding protein ArtJ (257 aa).

Residues 1-23 (MCIKRKKTWIAFLAVVCSFCLTG) form the signal peptide. L-arginine contacts are provided by asparagine 41, glutamate 48, glycine 100, serine 102, arginine 107, and tyrosine 151.

Belongs to the bacterial solute-binding protein 3 family.

It is found in the secreted. Its subcellular location is the cell surface. Its function is as follows. Probably part of an ABC transporter complex involved in arginine transport. Binds arginine. Interacts with host epithelial cells, suggesting a role in host-cell adhesion during infection. This is Probable ABC transporter arginine-binding protein ArtJ from Chlamydia trachomatis serovar D (strain ATCC VR-885 / DSM 19411 / UW-3/Cx).